The following is a 156-amino-acid chain: SsrA-binding protein (156 aa).

The protein belongs to the SmpB family.

It is found in the cytoplasm. Functionally, required for rescue of stalled ribosomes mediated by trans-translation. Binds to transfer-messenger RNA (tmRNA), required for stable association of tmRNA with ribosomes. tmRNA and SmpB together mimic tRNA shape, replacing the anticodon stem-loop with SmpB. tmRNA is encoded by the ssrA gene; the 2 termini fold to resemble tRNA(Ala) and it encodes a 'tag peptide', a short internal open reading frame. During trans-translation Ala-aminoacylated tmRNA acts like a tRNA, entering the A-site of stalled ribosomes, displacing the stalled mRNA. The ribosome then switches to translate the ORF on the tmRNA; the nascent peptide is terminated with the 'tag peptide' encoded by the tmRNA and targeted for degradation. The ribosome is freed to recommence translation, which seems to be the essential function of trans-translation. This chain is SsrA-binding protein, found in Clostridium beijerinckii (strain ATCC 51743 / NCIMB 8052) (Clostridium acetobutylicum).